The chain runs to 142 residues: Photosystem II extrinsic protein U (142 aa).

The signal sequence occupies residues 1–29 (MKGLVRLLTVFSLLLGCWGWLGTTQIAQA).

It belongs to the PsbU family. In terms of assembly, PSII is composed of 1 copy each of membrane proteins PsbA, PsbB, PsbC, PsbD, PsbE, PsbF, PsbH, PsbI, PsbJ, PsbK, PsbL, PsbM, PsbT, PsbX, PsbY, PsbZ, Psb30/Ycf12, peripheral proteins PsbO, CyanoQ (PsbQ), PsbU, PsbV and a large number of cofactors. It forms dimeric complexes.

Its subcellular location is the cellular thylakoid membrane. Its function is as follows. One of the extrinsic, lumenal subunits of photosystem II (PSII). PSII is a light-driven water plastoquinone oxidoreductase, using light energy to abstract electrons from H(2)O, generating a proton gradient subsequently used for ATP formation. The extrinsic proteins stabilize the structure of photosystem II oxygen-evolving complex (OEC), the ion environment of oxygen evolution and protect the OEC against heat-induced inactivation. The polypeptide is Photosystem II extrinsic protein U (Trichormus variabilis (strain ATCC 29413 / PCC 7937) (Anabaena variabilis)).